Consider the following 653-residue polypeptide: Intermembrane lipid transfer protein vps13l (653 aa).

Residues 5–49 form a B box-type zinc finger; that stretch reads ISELKCQQHDKLVTIYCCACDAYFCKKCDKEKHSQDDNQEDSLHI. Zn(2+)-binding residues include cysteine 10, histidine 13, cysteine 32, and histidine 37. Disordered stretches follow at residues 159-232, 248-420, and 627-653; these read NLID…NRKK, HILN…EDDS, and EKSN…PNEN. Residues 195 to 213 are compositionally biased toward low complexity; sequence SPSPSRSSESNSTTNNNNN. Acidic residues predominate over residues 266–277; it reads DYDDDDDNDDDN. Low complexity predominate over residues 278–293; the sequence is NNNNNNNNNNNNNNNN. Residues 314 to 330 show a composition bias toward basic and acidic residues; the sequence is ETEKEIENVENKIDNKP. Over residues 366 to 381 the composition is skewed to acidic residues; it reads IFEEEEEEEEDEDEVG.

This sequence belongs to the VPS13 family.

Its subcellular location is the membrane. Mediates the transfer of lipids between membranes at organelle contact sites. This is Intermembrane lipid transfer protein vps13l (vps13l) from Dictyostelium discoideum (Social amoeba).